A 72-amino-acid polypeptide reads, in one-letter code: Translation initiation factor IF-1 (72 aa).

The S1-like domain occupies 1–72 (MAREDHIEME…SKGRIVYRAR (72 aa)).

This sequence belongs to the IF-1 family. Component of the 30S ribosomal translation pre-initiation complex which assembles on the 30S ribosome in the order IF-2 and IF-3, IF-1 and N-formylmethionyl-tRNA(fMet); mRNA recruitment can occur at any time during PIC assembly.

The protein localises to the cytoplasm. Its function is as follows. One of the essential components for the initiation of protein synthesis. Stabilizes the binding of IF-2 and IF-3 on the 30S subunit to which N-formylmethionyl-tRNA(fMet) subsequently binds. Helps modulate mRNA selection, yielding the 30S pre-initiation complex (PIC). Upon addition of the 50S ribosomal subunit IF-1, IF-2 and IF-3 are released leaving the mature 70S translation initiation complex. The chain is Translation initiation factor IF-1 from Chromohalobacter salexigens (strain ATCC BAA-138 / DSM 3043 / CIP 106854 / NCIMB 13768 / 1H11).